Reading from the N-terminus, the 1066-residue chain is Ubiquitin conjugation factor E4 A (1066 aa).

The segment at Q35 to S57 is disordered. At K386 the chain carries N6-acetyllysine. The U-box domain occupies D987–Q1061.

The protein belongs to the ubiquitin conjugation factor E4 family.

The protein resides in the cytoplasm. The catalysed reaction is S-ubiquitinyl-[E2 ubiquitin-conjugating enzyme]-L-cysteine + [acceptor protein]-L-lysine = [E2 ubiquitin-conjugating enzyme]-L-cysteine + N(6)-ubiquitinyl-[acceptor protein]-L-lysine.. Its pathway is protein modification; protein ubiquitination. In terms of biological role, ubiquitin-protein ligase that probably functions as an E3 ligase in conjunction with specific E1 and E2 ligases. May also function as an E4 ligase mediating the assembly of polyubiquitin chains on substrates ubiquitinated by another E3 ubiquitin ligase. Mediates 'Lys-48'-linked polyubiquitination of substrates. The chain is Ubiquitin conjugation factor E4 A from Rattus norvegicus (Rat).